The sequence spans 1377 residues: ATP-dependent helicase/nuclease subunit A (1377 aa).

A UvrD-like helicase ATP-binding domain is found at Thr4–Arg478. Ala25–Thr32 lines the ATP pocket. A UvrD-like helicase C-terminal domain is found at Phe526–Gly867. Over residues Phe1036 to Asp1065 the composition is skewed to acidic residues. Residues Phe1036 to Asp1072 are disordered.

Belongs to the helicase family. AddA subfamily. Heterodimer of AddA and AddB/RexB. Mg(2+) serves as cofactor.

The catalysed reaction is Couples ATP hydrolysis with the unwinding of duplex DNA by translocating in the 3'-5' direction.. It catalyses the reaction ATP + H2O = ADP + phosphate + H(+). The heterodimer acts as both an ATP-dependent DNA helicase and an ATP-dependent, dual-direction single-stranded exonuclease. Recognizes the chi site generating a DNA molecule suitable for the initiation of homologous recombination. The AddA nuclease domain is required for chi fragment generation; this subunit has the helicase and 3' -&gt; 5' nuclease activities. This Lachnoclostridium phytofermentans (strain ATCC 700394 / DSM 18823 / ISDg) (Clostridium phytofermentans) protein is ATP-dependent helicase/nuclease subunit A.